A 337-amino-acid polypeptide reads, in one-letter code: Probable phospholipase A1 magnifin (337 aa).

Positions 1 to 21 are cleaved as a signal peptide; it reads MNLKYLLLFFCLVQVLHYCYS. The propeptide occupies 22-33; sequence HGDPSLSNELDR. An intrachain disulfide couples Cys39 to Cys123. The Nucleophile role is filled by Ser173. The active-site Charge relay system is Asp201. Disulfide bonds link Cys212/Cys217 and Cys255/Cys264. His266 functions as the Charge relay system in the catalytic mechanism. 3 cysteine pairs are disulfide-bonded: Cys281-Cys305, Cys282-Cys330, and Cys298-Cys303.

Belongs to the AB hydrolase superfamily. Lipase family. As to expression, expressed by the venom gland.

Its subcellular location is the secreted. The catalysed reaction is a 1,2-diacyl-sn-glycero-3-phosphocholine + H2O = a 2-acyl-sn-glycero-3-phosphocholine + a fatty acid + H(+). Functionally, catalyzes the hydrolysis of phosphatidylcholine with phospholipase A1 activity. May act as an allergen and induce hemolytic activity. In vivo, induces dose-dependent platelet aggregation (nanomolar concentration) and induces thrombosis. The chain is Probable phospholipase A1 magnifin from Vespa magnifica (Hornet).